Reading from the N-terminus, the 321-residue chain is uncharacterized protein (321 aa).

Residues 1 to 12 are compositionally biased toward basic and acidic residues; it reads MQGGREVGRESV. The segment at 1 to 85 is disordered; that stretch reads MQGGREVGRE…GWGEFEGFQE (85 aa). Over residues 53-67 the composition is skewed to polar residues; that stretch reads NANSSRLDEGLSSSR.

This is an uncharacterized protein from Rattus norvegicus (Rat).